The chain runs to 210 residues: Guanylate kinase (210 aa).

The region spanning 5–184 (GLLIVFSGPS…AAERVKHIIE (180 aa)) is the Guanylate kinase-like domain. 12-19 (GPSGVGKG) contacts ATP.

It belongs to the guanylate kinase family.

Its subcellular location is the cytoplasm. It carries out the reaction GMP + ATP = GDP + ADP. Functionally, essential for recycling GMP and indirectly, cGMP. This is Guanylate kinase from Streptococcus mutans serotype c (strain ATCC 700610 / UA159).